The primary structure comprises 469 residues: MLCLCLYVPLIGEAQTEFQYFESKGLPAELKSIFKLSVFIPSQEFSTYRQWKQKIVQAGDKDLDGQLDFEEFVHYLQDHEKKLRLVFKSLDKKNDGRIDAQEIMQSLRDLGVKISEQQAEKILKSMDKNGTMTIDWNEWRDYHLLHPVENIPEIILYWKHSTIFDVGENLTVPDEFTVEERQTGMWWRHLVAGGGAGAVSRTCTAPLDRLKVLMQVHASRSNNMCIVGGFTQMIREGGARSLWRGNGINVLKIAPESAIKFMAYEQIKRLIGSDQETLRIHERLVAGSLAGAIAQSSIYPMEVLKTRMALRKTGQYSGMLDCARKILAREGMAAFYKGYVPNMLGIIPYAGIDLAVYETLKNAWLQRYAVNSADPGVFVLLACGTMSSTCGQLASYPLALVRTRMQAQASMEGAPEVTMSSLFKQILRTEGAFGLYRGLAPNFMKVIPAVSISYVVYENLKITLGVQSR.

The Mitochondrial intermembrane portion of the chain corresponds to 1–189 (MLCLCLYVPL…ERQTGMWWRH (189 aa)). 3 consecutive EF-hand domains span residues 47–80 (TYRQWKQKIVQAGDKDLDGQLDFEEFVHYLQDHE), 78–113 (DHEKKLRLVFKSLDKKNDGRIDAQEIMQSLRDLGVK), and 114–149 (ISEQQAEKILKSMDKNGTMTIDWNEWRDYHLLHPVE). Ca(2+) contacts are provided by Asp60, Asp62, Asp64, Gln66, and Glu71. 3 Solcar repeats span residues 184–270 (GMWW…IKRL), 278–363 (LRIH…LKNA), and 375–463 (PGVF…LKIT). Residues 190–207 (LVAGGGAGAVSRTCTAPL) form a helical membrane-spanning segment. At 208–244 (DRLKVLMQVHASRSNNMCIVGGFTQMIREGGARSLWR) the chain is on the mitochondrial matrix side. A helical transmembrane segment spans residues 245-264 (GNGINVLKIAPESAIKFMAY). At 265 to 287 (EQIKRLIGSDQETLRIHERLVAG) the chain is on the mitochondrial intermembrane side. The helical transmembrane segment at 288–301 (SLAGAIAQSSIYPM) threads the bilayer. Residues 302 to 337 (EVLKTRMALRKTGQYSGMLDCARKILAREGMAAFYK) are Mitochondrial matrix-facing. Residues 338–357 (GYVPNMLGIIPYAGIDLAVY) traverse the membrane as a helical segment. Residues 358-380 (ETLKNAWLQRYAVNSADPGVFVL) lie on the Mitochondrial intermembrane side of the membrane. A helical transmembrane segment spans residues 381-398 (LACGTMSSTCGQLASYPL). Topologically, residues 399-437 (ALVRTRMQAQASMEGAPEVTMSSLFKQILRTEGAFGLYR) are mitochondrial matrix. Residues 438-457 (GLAPNFMKVIPAVSISYVVY) traverse the membrane as a helical segment. The Mitochondrial intermembrane segment spans residues 458–469 (ENLKITLGVQSR).

The protein belongs to the mitochondrial carrier (TC 2.A.29) family.

It localises to the mitochondrion inner membrane. Its function is as follows. Calcium-dependent mitochondrial solute carrier. Mitochondrial solute carriers shuttle metabolites, nucleotides, and cofactors through the mitochondrial inner membrane. May act as a ATP-Mg/Pi exchanger that mediates the transport of Mg-ATP in exchange for phosphate, catalyzing the net uptake or efflux of adenine nucleotides into or from the mitochondria. This chain is Calcium-binding mitochondrial carrier protein SCaMC-2 (SLC25A25), found in Bos taurus (Bovine).